Consider the following 206-residue polypeptide: Ras-related protein Rab7 (206 aa).

GTP contacts are provided by residues 15–22 (GDTGVGKT), 63–67 (DTAGQ), and 125–128 (NKID). Residues Cys-204 and Cys-206 are each lipidated (S-geranylgeranyl cysteine). The residue at position 206 (Cys-206) is a Cysteine methyl ester.

This sequence belongs to the small GTPase superfamily. Rab family.

Its subcellular location is the cell membrane. Protein transport. Probably involved in vesicular traffic. The polypeptide is Ras-related protein Rab7 (Vigna aconitifolia (Moth bean)).